The chain runs to 349 residues: tRNA N6-adenosine threonylcarbamoyltransferase (349 aa).

Histidine 116 and histidine 120 together coordinate Fe cation. Residues leucine 139–glycine 143, aspartate 172, glycine 185, and asparagine 283 contribute to the substrate site. Position 311 (aspartate 311) interacts with Fe cation.

The protein belongs to the KAE1 / TsaD family. The cofactor is Fe(2+).

Its subcellular location is the cytoplasm. It carries out the reaction L-threonylcarbamoyladenylate + adenosine(37) in tRNA = N(6)-L-threonylcarbamoyladenosine(37) in tRNA + AMP + H(+). In terms of biological role, required for the formation of a threonylcarbamoyl group on adenosine at position 37 (t(6)A37) in tRNAs that read codons beginning with adenine. Is involved in the transfer of the threonylcarbamoyl moiety of threonylcarbamoyl-AMP (TC-AMP) to the N6 group of A37, together with TsaE and TsaB. TsaD likely plays a direct catalytic role in this reaction. This is tRNA N6-adenosine threonylcarbamoyltransferase from Colwellia psychrerythraea (strain 34H / ATCC BAA-681) (Vibrio psychroerythus).